A 142-amino-acid polypeptide reads, in one-letter code: Hemoglobin subunit zeta (142 aa).

The residue at position 2 (S2) is an N-acetylserine. The Globin domain maps to 2-142 (SLTKTERTII…VSSVLTEKYR (141 aa)). T29 carries the phosphothreonine modification. Phosphoserine is present on S53. Heme b is bound at residue H59. Phosphoserine occurs at positions 73 and 82. Residue H88 participates in heme b binding.

This sequence belongs to the globin family. Heterotetramer of two zeta chains and two epsilon chains in early embryonic hemoglobin Gower-1; two zeta chains and two gamma chains in fetal hemoglobin Portland-1. Heterotetramer of two zeta chains and two beta chains in hemoglobin Portland-2, detected in fetuses and neonates with homozygous alpha-thalassemia. In terms of tissue distribution, detected in fetal erythrocytes (at protein level).

Functionally, the zeta chain is an alpha-type chain of mammalian embryonic hemoglobin. The protein is Hemoglobin subunit zeta (HBZ) of Homo sapiens (Human).